Reading from the N-terminus, the 1594-residue chain is RB1-inducible coiled-coil protein 1 (1594 aa).

3 positions are modified to phosphoserine: serine 222, serine 229, and serine 237. At threonine 238 the chain carries Phosphothreonine. Phosphoserine is present on residues serine 243, serine 253, serine 257, serine 261, and serine 266. The Nuclear localization signal motif lies at 566 to 569 (KPRK). A phosphoserine mark is found at serine 624, serine 647, serine 650, serine 652, serine 653, serine 734, serine 1091, serine 1222, serine 1370, and serine 1484. The interval 638–673 (EQKASVSQTSPQSASSPRMESTAGITTTTSPRTPPP) is disordered. Positions 641 to 654 (ASVSQTSPQSASSP) are enriched in low complexity. The FFAT motif lies at 731-737 (DFMSAVN). Coiled-coil stretches lie at residues 859–1397 (LKEK…SSSF) and 1438–1485 (METS…SQSM).

Belongs to the ATG17 family. As to quaternary structure, part of a complex consisting of ATG13/KIAA0652, ULK1 and RB1CC1. This complex associates with ATG101. Interacts with PTK2/FAK1 and PTK2B/PYK2. Interacts with GABARAP and GABARAPL1. Interacts with ATG16L1; the interaction is required for ULK1 complex-dependent autophagy. Interacts with RNF111, SKI and SMAD7. Interacts with COP1 in the cytoplasm of proliferating cells in response to UV stimulation. Interacts with TP53. Interacts with C9orf72. Interacts with WDR45B. Interacts with ATG13; this interaction is increased in the absence of TMEM39A. Interacts with WIPI2. Interacts with TAX1BP1. Interacts (via phosphorylated FFAT motif) with MOSPD2, VAPA and VAPB. Phosphorylation at Ser-734 of the FFAT motif activates interaction with MOSPD2, VAPA and VAPB. As to expression, expression levels correlated closely with those of RB1 in cancer cell lines as well as in various normal human tissues. Abundantly expressed in human musculoskeletal and cultured osteosarcoma cells.

The protein localises to the nucleus. Its subcellular location is the cytoplasm. It localises to the cytosol. It is found in the preautophagosomal structure. The protein resides in the lysosome. Its function is as follows. Involved in autophagy. Regulates early events but also late events of autophagosome formation through direct interaction with Atg16L1. Required for the formation of the autophagosome-like double-membrane structure that surrounds the Salmonella-containing vacuole (SCV) during S.typhimurium infection and subsequent xenophagy. Involved in repair of DNA damage caused by ionizing radiation, which subsequently improves cell survival by decreasing apoptosis. Inhibits PTK2/FAK1 and PTK2B/PYK2 kinase activity, affecting their downstream signaling pathways. Plays a role as a modulator of TGF-beta-signaling by restricting substrate specificity of RNF111. Functions as a DNA-binding transcription factor. Is a potent regulator of the RB1 pathway through induction of RB1 expression. Plays a crucial role in muscular differentiation. Plays an indispensable role in fetal hematopoiesis and in the regulation of neuronal homeostasis. The polypeptide is RB1-inducible coiled-coil protein 1 (Homo sapiens (Human)).